A 94-amino-acid chain; its full sequence is MLQSNEYFSGKVKSIGFTSSSTGRASVGVMAEGEYTFGTAEPEEMTVVSGALKVLLPGTVEWKVYTAGEVFNVPGHSEFHLQVAEPTSYLCRYL.

It belongs to the nucleoside phosphorylase PpnP family.

The enzyme catalyses a purine D-ribonucleoside + phosphate = a purine nucleobase + alpha-D-ribose 1-phosphate. The catalysed reaction is adenosine + phosphate = alpha-D-ribose 1-phosphate + adenine. It catalyses the reaction cytidine + phosphate = cytosine + alpha-D-ribose 1-phosphate. It carries out the reaction guanosine + phosphate = alpha-D-ribose 1-phosphate + guanine. The enzyme catalyses inosine + phosphate = alpha-D-ribose 1-phosphate + hypoxanthine. The catalysed reaction is thymidine + phosphate = 2-deoxy-alpha-D-ribose 1-phosphate + thymine. It catalyses the reaction uridine + phosphate = alpha-D-ribose 1-phosphate + uracil. It carries out the reaction xanthosine + phosphate = alpha-D-ribose 1-phosphate + xanthine. Catalyzes the phosphorolysis of diverse nucleosides, yielding D-ribose 1-phosphate and the respective free bases. Can use uridine, adenosine, guanosine, cytidine, thymidine, inosine and xanthosine as substrates. Also catalyzes the reverse reactions. The polypeptide is Pyrimidine/purine nucleoside phosphorylase (Salmonella agona (strain SL483)).